The chain runs to 209 residues: Large ribosomal subunit protein uL3 (209 aa).

An N5-methylglutamine modification is found at Q150.

The protein belongs to the universal ribosomal protein uL3 family. In terms of assembly, part of the 50S ribosomal subunit. Forms a cluster with proteins L14 and L19. Post-translationally, methylated by PrmB.

Its function is as follows. One of the primary rRNA binding proteins, it binds directly near the 3'-end of the 23S rRNA, where it nucleates assembly of the 50S subunit. In Vibrio campbellii (strain ATCC BAA-1116), this protein is Large ribosomal subunit protein uL3.